The primary structure comprises 90 residues: MSVKIRMRRMGSKRKPFYRIVVADSRMPRDGRFIEEVGYYNPLTNPDEVKLEEDKIFEWLEKGAQPSDTVRSLLSKAGLMTRYHDAKYGK.

Belongs to the bacterial ribosomal protein bS16 family.

The chain is Small ribosomal subunit protein bS16 from Lactobacillus gasseri (strain ATCC 33323 / DSM 20243 / BCRC 14619 / CIP 102991 / JCM 1131 / KCTC 3163 / NCIMB 11718 / NCTC 13722 / AM63).